We begin with the raw amino-acid sequence, 467 residues long: tRNA-2-methylthio-N(6)-dimethylallyladenosine synthase (467 aa).

One can recognise an MTTase N-terminal domain in the interval Arg-5–Arg-125. Cys-14, Cys-50, Cys-88, Cys-166, Cys-170, and Cys-173 together coordinate [4Fe-4S] cluster. The region spanning Arg-152 to Ala-384 is the Radical SAM core domain. In terms of domain architecture, TRAM spans Lys-387 to Ala-449.

It belongs to the methylthiotransferase family. MiaB subfamily. In terms of assembly, monomer. The cofactor is [4Fe-4S] cluster.

It localises to the cytoplasm. The catalysed reaction is N(6)-dimethylallyladenosine(37) in tRNA + (sulfur carrier)-SH + AH2 + 2 S-adenosyl-L-methionine = 2-methylsulfanyl-N(6)-dimethylallyladenosine(37) in tRNA + (sulfur carrier)-H + 5'-deoxyadenosine + L-methionine + A + S-adenosyl-L-homocysteine + 2 H(+). Its function is as follows. Catalyzes the methylthiolation of N6-(dimethylallyl)adenosine (i(6)A), leading to the formation of 2-methylthio-N6-(dimethylallyl)adenosine (ms(2)i(6)A) at position 37 in tRNAs that read codons beginning with uridine. The protein is tRNA-2-methylthio-N(6)-dimethylallyladenosine synthase of Bradyrhizobium sp. (strain ORS 278).